Here is a 103-residue protein sequence, read N- to C-terminus: Large ribosomal subunit protein bL21 (103 aa).

Belongs to the bacterial ribosomal protein bL21 family. In terms of assembly, part of the 50S ribosomal subunit. Contacts protein L20.

In terms of biological role, this protein binds to 23S rRNA in the presence of protein L20. The sequence is that of Large ribosomal subunit protein bL21 from Vibrio atlanticus (strain LGP32) (Vibrio splendidus (strain Mel32)).